The sequence spans 232 residues: uncharacterized protein (232 aa).

The segment covering 86 to 95 (RGLPRPEFKA) has biased composition (basic and acidic residues). A disordered region spans residues 86–107 (RGLPRPEFKANGHPSMDAEADD).

This is an uncharacterized protein from Sinorhizobium fredii (strain NBRC 101917 / NGR234).